The primary structure comprises 227 residues: Phosphoribosylformylglycinamidine synthase subunit PurQ (227 aa).

The 223-residue stretch at 3-225 folds into the Glutamine amidotransferase type-1 domain; it reads FAVIVFPGSN…LKQWRETYVV (223 aa). Catalysis depends on cysteine 86, which acts as the Nucleophile. Residues histidine 194 and glutamate 196 contribute to the active site.

Part of the FGAM synthase complex composed of 1 PurL, 1 PurQ and 2 PurS subunits.

The protein localises to the cytoplasm. The enzyme catalyses N(2)-formyl-N(1)-(5-phospho-beta-D-ribosyl)glycinamide + L-glutamine + ATP + H2O = 2-formamido-N(1)-(5-O-phospho-beta-D-ribosyl)acetamidine + L-glutamate + ADP + phosphate + H(+). The catalysed reaction is L-glutamine + H2O = L-glutamate + NH4(+). It functions in the pathway purine metabolism; IMP biosynthesis via de novo pathway; 5-amino-1-(5-phospho-D-ribosyl)imidazole from N(2)-formyl-N(1)-(5-phospho-D-ribosyl)glycinamide: step 1/2. In terms of biological role, part of the phosphoribosylformylglycinamidine synthase complex involved in the purines biosynthetic pathway. Catalyzes the ATP-dependent conversion of formylglycinamide ribonucleotide (FGAR) and glutamine to yield formylglycinamidine ribonucleotide (FGAM) and glutamate. The FGAM synthase complex is composed of three subunits. PurQ produces an ammonia molecule by converting glutamine to glutamate. PurL transfers the ammonia molecule to FGAR to form FGAM in an ATP-dependent manner. PurS interacts with PurQ and PurL and is thought to assist in the transfer of the ammonia molecule from PurQ to PurL. The sequence is that of Phosphoribosylformylglycinamidine synthase subunit PurQ from Bacillus mycoides (strain KBAB4) (Bacillus weihenstephanensis).